A 457-amino-acid chain; its full sequence is Phosphomethylpyrimidine synthase (457 aa).

Substrate-binding positions include N81, M110, Y139, H175, 195–197 (SRG), 236–239 (DALR), and E275. H279 serves as a coordination point for Zn(2+). Y302 contributes to the substrate binding site. H343 is a binding site for Zn(2+). Positions 423, 426, and 431 each coordinate [4Fe-4S] cluster.

The protein belongs to the ThiC family. It depends on [4Fe-4S] cluster as a cofactor.

The catalysed reaction is 5-amino-1-(5-phospho-beta-D-ribosyl)imidazole + S-adenosyl-L-methionine = 4-amino-2-methyl-5-(phosphooxymethyl)pyrimidine + CO + 5'-deoxyadenosine + formate + L-methionine + 3 H(+). Its pathway is cofactor biosynthesis; thiamine diphosphate biosynthesis. Catalyzes the synthesis of the hydroxymethylpyrimidine phosphate (HMP-P) moiety of thiamine from aminoimidazole ribotide (AIR) in a radical S-adenosyl-L-methionine (SAM)-dependent reaction. This Aquifex aeolicus (strain VF5) protein is Phosphomethylpyrimidine synthase.